We begin with the raw amino-acid sequence, 1349 residues long: Adhesion G protein-coupled receptor F5 (1349 aa).

The signal sequence occupies residues 1–24 (MKSSRTVTLYFVLIVICSSEATWS). Residues 25 to 1016 (RPAEPIVHPL…PGSLLKILLD (992 aa)) lie on the Extracellular side of the membrane. Asn73, Asn94, Asn185, Asn254, Asn270, Asn286, Asn299, Asn326, Asn337, Asn349, Asn396, Asn470, Asn503, Asn538, Asn649, and Asn666 each carry an N-linked (GlcNAc...) asparagine glycan. The 109-residue stretch at 163 to 271 (PETYITLKIK…NSFQGTPSNE (109 aa)) folds into the SEA domain. Ig-like domains follow at residues 268 to 366 (PSNE…LDVT), 367 to 464 (PIRI…IAVT), and 469 to 559 (ANLT…KDVT). Cys291 and Cys348 form a disulfide bridge. Cys389 and Cys447 are joined by a disulfide. Cys490 and Cys543 are disulfide-bonded. Ser819 carries the post-translational modification Phosphoserine. 3 N-linked (GlcNAc...) asparagine glycosylation sites follow: Asn820, Asn958, and Asn963. Positions 842–1006 (TPPFLFHPNV…SILMSPDSPD (165 aa)) constitute a GAIN-B domain. Intrachain disulfides connect Cys954/Cys988 and Cys973/Cys990. The GPS stretch occupies residues 954-1006 (CVFWNFSLANNTGGWDSSGCTVEDDGRDNRDRVFCKCNHLTSFSILMSPDSPD). The tract at residues 994-1009 (TSFSILMSPDSPDPGS) is tethered agonist. Residues 1017 to 1036 (IISYIGLGFSIVSLAACLVV) traverse the membrane as a helical segment. The Cytoplasmic portion of the chain corresponds to 1037 to 1055 (EAMVWKSVTKNRTSYMRHI). A helical transmembrane segment spans residues 1056 to 1078 (CIVNIALCLLIADIWFIVAGAIH). Residues 1079 to 1097 (DGHYPLNETACVAATFFIH) are Extracellular-facing. N-linked (GlcNAc...) asparagine glycosylation is present at Asn1085. A helical transmembrane segment spans residues 1098–1120 (FFYLSVFFWMLTLGLMLFYRLIF). Topologically, residues 1121–1131 (ILHDASKSTQK) are cytoplasmic. A helical membrane pass occupies residues 1132-1154 (AIAFSLGYGCPLIISSITVGVTQ). Residues 1155 to 1173 (PQEVYMRKNACWLNWEDTR) lie on the Extracellular side of the membrane. Residues 1174–1196 (ALLAFAIPALIIVVVNVSITVVV) form a helical membrane-spanning segment. The Cytoplasmic segment spans residues 1197–1216 (ITKILRPSVGDKPGKQEKSS). The chain crosses the membrane as a helical span at residues 1217–1239 (LFQISKSIGVLTPLLGLTWGFGL). Over 1240-1248 (ATVIQGSNA) the chain is Extracellular. A helical transmembrane segment spans residues 1249–1271 (VFHIIFTLLNAFQGLFILLFGCL). At 1272 to 1349 (WDQKVQEALL…NSSSAYSLLN (78 aa)) the chain is on the cytoplasmic side. A Phosphothreonine modification is found at Thr1303. Residue Ser1310 is modified to Phosphoserine. The span at 1329-1343 (STPETTSSSVENSSS) shows a compositional bias: low complexity. Residues 1329–1349 (STPETTSSSVENSSSAYSLLN) are disordered.

Belongs to the G-protein coupled receptor 2 family. Adhesion G-protein coupled receptor (ADGR) subfamily. Homodimer; disulfide-linked. Heterodimer of 2 chains generated by proteolytic processing; the large extracellular N-terminal fragment and the membrane-bound C-terminal fragment predominantly remain associated and non-covalently linked. Fragment generates by the processing enzyme furin remains attached to the extracellular N-terminal fragment. Interacts (via N-terminal extracellular domain) with SFTPD. In terms of processing, highly glycosylated. Proteolytically cleaved at multiple sites: one in the GPS region of the GAIN-B domain (S1 site) and the other in the SEA domain (S2 site). The proteolytic cleavage at S1 site generates an extracellular subunit and a seven-transmembrane subunit. The proteolytic cleavage at S2 site generates a fragment that undergoes proteolytic cleavage by the processing enzyme furin. In terms of tissue distribution, highly expressed in the lung and to a much lesser extent in the kidney and heart. Dense localization in alveolar walls of the lung and in the intercalated cells of the collecting duct of the kidney.

It is found in the cell membrane. With respect to regulation, as an adhesion G protein-coupled receptor (aGPCR) exhibits a large N-terminal extracellular domain containing highly conserved GPCR autoproteolysis-inducing (GAIN) domain. During synthesis, intracellular autoproteolytic processing of nascent chain within the GAIN domain generates a mature protein, consisting of an N-terminal fragment that is non-covalently linked to the C-terminal fragment. The mature protein is routed to the plasma membrane where the N- and C-terminal fragments remain associated, forming the holoreceptor. Dissociation of the aGPCR fragments stimulates G protein signaling through the action of the tethered-peptide agonist stalk that is occluded within the GAIN domain in the holoreceptor form. This dissociation might be induced by ligand binding, such as that of sFNDC4. Functionally, receptor that plays a critical role in lung surfactant homeostasis. May play a role in controlling adipocyte function. Its function is as follows. Adhesion G protein-coupled receptor. In alveolar type II (ATII or AT2) cells, required for normal lung surfactant homeostasis. Modulation of both surfactant secretion and uptake by ATII cells is mediated by the downstream activation of GNAQ/GNA11 proteins and may be a consequence of increased cortical F-actin assembly induced by ADGRF5 activation. In the kidney, may play a role in the regulation of acid excretion into the primary urine, possibly by regulating the surface expression of V-ATPase proton pump. As a receptor for soluble FNDC4 (sFNDC4), required for proper systemic glucose tolerance, specifically sensitizing white adipose tissue to insulin. Also plays a role in sFNDC4-induced decrease of local inflammation in white adipose tissue. The sequence is that of Adhesion G protein-coupled receptor F5 (Adgrf5) from Rattus norvegicus (Rat).